The chain runs to 188 residues: MSIKSDKWIRRMAEQQGMIAPFAPELVRHNGTGKIVSYGTSSYGYDVRCANEFKIFTNINSTIVDPKDFDARNFVDFVGDVCIIPPNSFALARTVEYFRIPRNVLTVCLGKSTYARCGIIVNVTPLEPEWEGHVTLEFSNTTPLPAKIYANEGIAQMLFFEADEVCETSYKDRGGKYLGQTGVTLPKI.

Residues 111 to 116 (KSTYAR), 135 to 137 (TLE), Gln156, Tyr170, and Gln180 each bind dCTP. Catalysis depends on Glu137, which acts as the Proton donor/acceptor.

It belongs to the dCTP deaminase family. In terms of assembly, homotrimer.

It carries out the reaction dCTP + H2O + H(+) = dUTP + NH4(+). The protein operates within pyrimidine metabolism; dUMP biosynthesis; dUMP from dCTP (dUTP route): step 1/2. In terms of biological role, catalyzes the deamination of dCTP to dUTP. This chain is dCTP deaminase, found in Aromatoleum aromaticum (strain DSM 19018 / LMG 30748 / EbN1) (Azoarcus sp. (strain EbN1)).